A 902-amino-acid chain; its full sequence is U3 small nucleolar RNA-associated protein 21 homolog (902 aa).

WD repeat units follow at residues 40 to 71 (DIEA…LLFV), 80 to 110 (TCLK…WDID), 119 to 154 (THLD…LHTT), 164 to 198 (TSLL…RVHE), 206 to 243 (GITS…MEFK), 249 to 284 (LSCS…QNVT), 289 to 332 (FGSL…RSRN), 339 to 373 (SFVK…QSTE), 399 to 438 (TALS…GQHV), 447 to 481 (VRSV…KRKS), 492 to 528 (VTAV…DSLD), 533 to 568 (ITHA…VREL), 570 to 611 (GHSN…DSIS), and 613 to 651 (PSVC…KHVS).

Interacts with snoRNA U3. Interacts with MPP10. Component of the ribosomal small subunit (SSU) processome composed of at least 40 protein subunits and snoRNA U3.

It is found in the nucleus. It localises to the nucleolus. Involved in nucleolar processing of pre-18S ribosomal RNA and ribosome assembly. In Schizosaccharomyces pombe (strain 972 / ATCC 24843) (Fission yeast), this protein is U3 small nucleolar RNA-associated protein 21 homolog.